A 337-amino-acid chain; its full sequence is Mitochondrial metalloendopeptidase OMA1 (337 aa).

Residues 1–68 are Mitochondrial matrix-facing; it reads MFLNKYISNY…QPNPRDKRFQ (68 aa). Residues 69–89 form a helical membrane-spanning segment; it reads WIFGALIAGGGVYYFTHLEYV. Topologically, residues 90 to 337 are mitochondrial intermembrane; sequence PISNRRRFND…MLQSFKEVHW (248 aa). A Zn(2+)-binding site is contributed by His195. The active site involves Glu196. The Zn(2+) site is built by His199 and Glu250. A disulfide bridge links Cys265 with Cys321.

Belongs to the peptidase M48 family. Zn(2+) is required as a cofactor.

It localises to the mitochondrion inner membrane. Protease activity is induced in response to various mitochondrial stress. In terms of biological role, protease that is part of the quality control system in the inner membrane of mitochondria. Cleaves and thereby promotes the turnover of mistranslated or misfolded membrane protein. In Schizosaccharomyces pombe (strain 972 / ATCC 24843) (Fission yeast), this protein is Mitochondrial metalloendopeptidase OMA1.